The primary structure comprises 473 residues: Mogroside IIIx synthase (473 aa).

The Proton acceptor role is filled by His-21. Residue Asp-123 is the Charge relay of the active site. Thr-274, Gln-337, Trp-355, Asn-356, Ser-357, Glu-360, Asp-376, and Gln-377 together coordinate UDP-alpha-D-glucose.

The protein belongs to the UDP-glycosyltransferase family. Highly expressed in mature fruits.

The catalysed reaction is mogroside IIE + UDP-alpha-D-glucose = mogroside IIIX + UDP + H(+). The enzyme catalyses mogroside III + UDP-alpha-D-glucose = siamenoside I + UDP + H(+). The protein operates within secondary metabolite biosynthesis; terpenoid biosynthesis. Functionally, UDP-glycosyltransferase involved in the biosynthesis of cucurbitacin and mogroside tetracyclic triterpene natural products (e.g. siamenoside I and mogrosides IV, V and VI). Cucurbitacins have cytotoxic properties and exhibit deterrent taste as a defense barrier against herbivores. Mogrosides are nonsugar highly oxygenated compounds used as high-intensity zero-calorie sweeteners; they also possess pharmacological properties such as regulating immunity, lowering blood sugar and lipid levels, protecting the liver, and acting as antioxidants and antitumor agents. Catalyzes the branched glucosylations of mogroside II-E and mogroside III. The sequence is that of Mogroside IIIx synthase from Siraitia grosvenorii (Monk's fruit).